Consider the following 510-residue polypeptide: D-allose import ATP-binding protein AlsA (510 aa).

ABC transporter domains are found at residues 6 to 245 and 260 to 509; these read ISMA…VGRE and LAHE…ALPQ. ATP is bound at residue 38–45; that stretch reads GENGAGKS.

This sequence belongs to the ABC transporter superfamily. D-allose importer (TC 3.A.1.2.6) family. The complex is composed of two ATP-binding proteins (AlsA), two transmembrane proteins (AlsC) and a solute-binding protein (AlsB).

The protein localises to the cell inner membrane. It carries out the reaction D-allose(out) + ATP + H2O = D-allose(in) + ADP + phosphate + H(+). Part of the ABC transporter complex AlsBAC involved in D-allose import. Probably responsible for energy coupling to the transport system. The sequence is that of D-allose import ATP-binding protein AlsA (alsA) from Escherichia coli (strain K12).